The following is a 440-amino-acid chain: MGRFNVDMIERVIVAPCLQSPKNILHLSPIDNKTRGLTNILSVYNASQRVSVSADPAKTIREALSKVLVYYPPFAGRLRNTENGDLEVECTGEGAVFVEAMADNDLSVLQDFNEYDPSFQQLVFNLREDVNIEDLHLLTVQVTRFTCGGFVVGTRFHHSVSDGKGIGQLLKGMGEMARGEFKPSLEPIWNREMVKPEDIMYLQFDHFDFIHPPLNLEKSIQASMVISFERINYIKRCMMEECKEFFSAFEVVVALIWLARTKSFRIPPNEYVKIIFPIDMRNSFDSPLPKGYYGNAIGNACAMDNVKDLLNGSLLYALMLIKKSKFALNENFKSRILTKPSTLDANMKHENVVGCGDWRNLGFYEADFGWGNAVNVSPMQQQREHELAMQNYFLFLRSAKNMIDGIKILMFMPASMVKPFKIEMEVTINKYVAKICNSKL.

Catalysis depends on proton acceptor residues His-158 and Asp-367.

Belongs to the plant acyltransferase family.

The enzyme catalyses 10-deacetyl-2-debenzoylbaccatin III + benzoyl-CoA = 10-deacetylbaccatin III + CoA. The protein operates within alkaloid biosynthesis; taxol biosynthesis; baccatin III from 10-deacetyl-2-debenzoylbaccatin III: step 1/2. Functionally, catalyzes the conversion of 2-debenzoyl-7,13-diacetylbaccatin III, a semisynthetic substrate, to 7,13-diacetylbaccatin III. In Taxus cuspidata (Japanese yew), this protein is 2-alpha-hydroxytaxane 2-O-benzoyltransferase.